The primary structure comprises 276 residues: MGIRFLRSYTPGTRNRSVSDFNEITINKPEKSLTFSHHRCKGRNHRGIITCRHRGGGHKRLYRQIDFQRDKTKVPAQVLSIEYDPNRNARIALLRYPDGEKRYILHPRGLKIGETVISDVNASIQTGNTLPLRNIPLGTEVHNVEFQPGSGGQLARSAGTLVELLAKEGDFVTLRLPSKEIRLISRHCWATIGQVGHVEAYSIVVGKAGRTRWLGIRPTVRGSVMNPVDHPHGGGEGRAPIGRSRPVTPWGKPALGQKTRKPKKQSNKLILRKRKK.

Residues 221-276 form a disordered region; the sequence is RGSVMNPVDHPHGGGEGRAPIGRSRPVTPWGKPALGQKTRKPKKQSNKLILRKRKK. Residues 258 to 276 show a composition bias toward basic residues; the sequence is KTRKPKKQSNKLILRKRKK.

Belongs to the universal ribosomal protein uL2 family. Part of the 50S ribosomal subunit.

It localises to the plastid. Its subcellular location is the chloroplast. The sequence is that of Large ribosomal subunit protein uL2c (rpl2) from Stigeoclonium helveticum (Green alga).